The sequence spans 139 residues: Large-conductance mechanosensitive channel (139 aa).

The next 2 helical transmembrane spans lie at 9–29 and 79–99; these read AFAV…GAAF and IQTV…VKAI.

The protein belongs to the MscL family. In terms of assembly, homopentamer.

The protein localises to the cell inner membrane. Functionally, channel that opens in response to stretch forces in the membrane lipid bilayer. May participate in the regulation of osmotic pressure changes within the cell. In Pseudomonas putida (strain ATCC 700007 / DSM 6899 / JCM 31910 / BCRC 17059 / LMG 24140 / F1), this protein is Large-conductance mechanosensitive channel.